The following is a 455-amino-acid chain: DNA N(6)-methyladenine demethylase ALKBH1C (455 aa).

2 disordered regions span residues methionine 1–asparagine 114 and serine 173–serine 194. A Fe2OG dioxygenase domain is found at leucine 345–tyrosine 455. Asparagine 352–tyrosine 354 contacts 2-oxoglutarate. Residues histidine 363, aspartate 365, and histidine 423 each contribute to the Fe cation site. Arginine 447 to arginine 453 provides a ligand contact to 2-oxoglutarate.

This sequence belongs to the alkB family. It depends on Fe(2+) as a cofactor. Expressed at low levels in roots and seedlings, but barely in cauline leaves, rosette leaves, stems, siliques and flowers.

Its subcellular location is the nucleus. The protein resides in the cytoplasm. The catalysed reaction is an N(6)-methyl-2'-deoxyadenosine in DNA + 2-oxoglutarate + O2 = a 2'-deoxyadenosine in DNA + formaldehyde + succinate + CO2. In terms of biological role, dioxygenase that catalyzes DNA N(6)-methyladenine (6 mA) demethylation with a low efficiency. This chain is DNA N(6)-methyladenine demethylase ALKBH1C, found in Arabidopsis thaliana (Mouse-ear cress).